The sequence spans 2623 residues: Probable polyketide synthase 31 (2623 aa).

Residues 1-11 show a composition bias toward low complexity; sequence MTQNIDNNNNK. Residues 1-25 form a disordered region; sequence MTQNIDNNNNKLIRDRNDDDDVDRN. Positions 27 to 461 constitute a Ketosynthase family 3 (KS3) domain; sequence DGDVAVIGIG…GSNVCLILSE (435 aa). Active-site for beta-ketoacyl synthase activity residues include Cys-199, His-338, and His-384. The acyl/malonyl transferase stretch occupies residues 666-699; sequence GVSADIIIGHSLGEVSSPYCSGMIDFQTLCYLIY. The For acyl/malonyl transferase activity role is filled by Ser-676. An N-terminal hotdog fold region spans residues 959–1088; sequence HEKIKSEGPS…GNFNLTKHNS (130 aa). Residues 959–1267 enclose the PKS/mFAS DH domain; it reads HEKIKSEGPS…CALVSLGSNP (309 aa). His-1000 functions as the Proton acceptor; for dehydratase activity in the catalytic mechanism. The tract at residues 1105-1267 is C-terminal hotdog fold; sequence NFTSISKQDF…CALVSLGSNP (163 aa). The active-site Proton donor; for dehydratase activity is the Asp-1177. Positions 2524–2601 constitute a Carrier domain; that stretch reads ANNEIIHSTI…QSIEIIKSAK (78 aa). O-(pantetheine 4'-phosphoryl)serine is present on Ser-2561. Residues 2600–2623 are disordered; sequence AKNNNKNNNNNNNKNNSNNKNKNN. Positions 2601–2623 are enriched in low complexity; the sequence is KNNNKNNNNNNNKNNSNNKNKNN.

Pantetheine 4'-phosphate is required as a cofactor.

Functionally, probable polyketide synthase. The polypeptide is Probable polyketide synthase 31 (pks31) (Dictyostelium discoideum (Social amoeba)).